We begin with the raw amino-acid sequence, 480 residues long: Ribosomal RNA small subunit methyltransferase F (480 aa).

S-adenosyl-L-methionine-binding positions include 126–132 (AAAPGSK), E150, D177, and D195. C248 (nucleophile) is an active-site residue.

It belongs to the class I-like SAM-binding methyltransferase superfamily. RsmB/NOP family.

The protein localises to the cytoplasm. The enzyme catalyses cytidine(1407) in 16S rRNA + S-adenosyl-L-methionine = 5-methylcytidine(1407) in 16S rRNA + S-adenosyl-L-homocysteine + H(+). Specifically methylates the cytosine at position 1407 (m5C1407) of 16S rRNA. This chain is Ribosomal RNA small subunit methyltransferase F, found in Cronobacter sakazakii (strain ATCC BAA-894) (Enterobacter sakazakii).